Reading from the N-terminus, the 196-residue chain is Ribosome maturation factor RimP (196 aa).

It belongs to the RimP family.

The protein localises to the cytoplasm. In terms of biological role, required for maturation of 30S ribosomal subunits. The chain is Ribosome maturation factor RimP from Dinoroseobacter shibae (strain DSM 16493 / NCIMB 14021 / DFL 12).